The sequence spans 294 residues: NAD kinase (294 aa).

Asp-72 (proton acceptor) is an active-site residue. NAD(+) contacts are provided by residues 72 to 73 (DG), 146 to 147 (ND), Arg-157, Arg-174, Asp-176, 187 to 192 (TAYALS), and Gln-247.

It belongs to the NAD kinase family. It depends on a divalent metal cation as a cofactor.

The protein resides in the cytoplasm. It catalyses the reaction NAD(+) + ATP = ADP + NADP(+) + H(+). In terms of biological role, involved in the regulation of the intracellular balance of NAD and NADP, and is a key enzyme in the biosynthesis of NADP. Catalyzes specifically the phosphorylation on 2'-hydroxyl of the adenosine moiety of NAD to yield NADP. The chain is NAD kinase from Saccharophagus degradans (strain 2-40 / ATCC 43961 / DSM 17024).